The chain runs to 429 residues: Glutamate-1-semialdehyde 2,1-aminomutase (429 aa).

Lys-265 carries the post-translational modification N6-(pyridoxal phosphate)lysine.

Belongs to the class-III pyridoxal-phosphate-dependent aminotransferase family. HemL subfamily. Homodimer. It depends on pyridoxal 5'-phosphate as a cofactor.

It localises to the cytoplasm. It catalyses the reaction (S)-4-amino-5-oxopentanoate = 5-aminolevulinate. The protein operates within porphyrin-containing compound metabolism; protoporphyrin-IX biosynthesis; 5-aminolevulinate from L-glutamyl-tRNA(Glu): step 2/2. This chain is Glutamate-1-semialdehyde 2,1-aminomutase, found in Shewanella halifaxensis (strain HAW-EB4).